We begin with the raw amino-acid sequence, 752 residues long: Probable GTP-binding protein OBGC1, chloroplastic (752 aa).

The N-terminal 90 residues, 1–90 (MAPAVAVVAA…RFPTANPEPR (90 aa)), are a transit peptide targeting the chloroplast. The disordered stretch occupies residues 19–121 (FSAEARRNTK…EEDEVELGLR (103 aa)). Positions 26–36 (NTKGSRSKRGS) are enriched in basic residues. The span at 103-117 (GDDEEDEEEEEDEVE) shows a compositional bias: acidic residues. Residues 294 to 452 (MRCFDTAKIY…MWIDLELKLV (159 aa)) form the Obg domain. An OBG-type G domain is found at 453–621 (ADVGIVGAPN…VVLAAYKVLQ (169 aa)). Residues 459-466 (GAPNAGKS), 484-488 (FTTLL), 506-509 (DLPG), 573-576 (NKMD), and 602-604 (SAM) each bind GTP. Mg(2+) contacts are provided by Ser-466 and Thr-486. Residues 649–728 (ERRAPMNEFE…VGEMEMVWTD (80 aa)) form the OCT domain. A disordered region spans residues 728–752 (DEPSKTRSSKTMNSKDDSVRWPEFG). Residues 740-752 (NSKDDSVRWPEFG) are compositionally biased toward basic and acidic residues.

Belongs to the TRAFAC class OBG-HflX-like GTPase superfamily. OBG GTPase family. Requires Mg(2+) as cofactor.

It is found in the plastid. Its subcellular location is the chloroplast. Probable GTP-binding protein that may play a role in chloroplast development. This is Probable GTP-binding protein OBGC1, chloroplastic (OBGC1) from Oryza sativa subsp. indica (Rice).